We begin with the raw amino-acid sequence, 259 residues long: MILPNINPIIFSIGPFSISWYSLSYVVGILLGWFYATKIIEKFKPEITKKHIEDFITYAIIGIIVGGRLGYVLLYNPLKYFANPIEILKTYEGGMSFHGATIGIIISAYLFCQKYKINFLSLTDIITTVVPIGLFLGRIANFINCELYGRITNSSFGIIFPNSDLEPRHPSQLYEAFFEGLILFCILAYAVFRHDTLKKQGLNSGIYLIFYSLFRIIIEMFREPDIQIGFILDSLTMGQILSAPMLLLGSYLICRLNSK.

A run of 4 helical transmembrane segments spans residues 9–29, 55–75, 92–112, and 117–137; these read IIFS…VVGI, FITY…VLLY, EGGM…YLFC, and INFL…LFLG. R138 is a binding site for a 1,2-diacyl-sn-glycero-3-phospho-(1'-sn-glycerol). 3 consecutive transmembrane segments (helical) span residues 172–192, 201–221, and 228–248; these read QLYE…YAVF, GLNS…IEMF, and IGFI…MLLL.

The protein belongs to the Lgt family.

The protein resides in the cell inner membrane. It catalyses the reaction L-cysteinyl-[prolipoprotein] + a 1,2-diacyl-sn-glycero-3-phospho-(1'-sn-glycerol) = an S-1,2-diacyl-sn-glyceryl-L-cysteinyl-[prolipoprotein] + sn-glycerol 1-phosphate + H(+). It participates in protein modification; lipoprotein biosynthesis (diacylglyceryl transfer). Catalyzes the transfer of the diacylglyceryl group from phosphatidylglycerol to the sulfhydryl group of the N-terminal cysteine of a prolipoprotein, the first step in the formation of mature lipoproteins. The polypeptide is Phosphatidylglycerol--prolipoprotein diacylglyceryl transferase (Rickettsia typhi (strain ATCC VR-144 / Wilmington)).